Consider the following 205-residue polypeptide: Thiamine-phosphate synthase (205 aa).

4-amino-2-methyl-5-(diphosphooxymethyl)pyrimidine is bound by residues 37-41 (QVREK) and Asn-69. Residues Asp-70 and Asp-89 each coordinate Mg(2+). 4-amino-2-methyl-5-(diphosphooxymethyl)pyrimidine is bound at residue Ser-108. 134–136 (TGS) contacts 2-[(2R,5Z)-2-carboxy-4-methylthiazol-5(2H)-ylidene]ethyl phosphate. Lys-137 is a 4-amino-2-methyl-5-(diphosphooxymethyl)pyrimidine binding site. 2-[(2R,5Z)-2-carboxy-4-methylthiazol-5(2H)-ylidene]ethyl phosphate contacts are provided by residues Gly-165 and 185-186 (IS).

Belongs to the thiamine-phosphate synthase family. It depends on Mg(2+) as a cofactor.

It catalyses the reaction 2-[(2R,5Z)-2-carboxy-4-methylthiazol-5(2H)-ylidene]ethyl phosphate + 4-amino-2-methyl-5-(diphosphooxymethyl)pyrimidine + 2 H(+) = thiamine phosphate + CO2 + diphosphate. The enzyme catalyses 2-(2-carboxy-4-methylthiazol-5-yl)ethyl phosphate + 4-amino-2-methyl-5-(diphosphooxymethyl)pyrimidine + 2 H(+) = thiamine phosphate + CO2 + diphosphate. It carries out the reaction 4-methyl-5-(2-phosphooxyethyl)-thiazole + 4-amino-2-methyl-5-(diphosphooxymethyl)pyrimidine + H(+) = thiamine phosphate + diphosphate. The protein operates within cofactor biosynthesis; thiamine diphosphate biosynthesis; thiamine phosphate from 4-amino-2-methyl-5-diphosphomethylpyrimidine and 4-methyl-5-(2-phosphoethyl)-thiazole: step 1/1. Its function is as follows. Condenses 4-methyl-5-(beta-hydroxyethyl)thiazole monophosphate (THZ-P) and 2-methyl-4-amino-5-hydroxymethyl pyrimidine pyrophosphate (HMP-PP) to form thiamine monophosphate (TMP). The protein is Thiamine-phosphate synthase of Clostridium botulinum (strain ATCC 19397 / Type A).